Consider the following 102-residue polypeptide: Large ribosomal subunit protein uL24 (102 aa).

It belongs to the universal ribosomal protein uL24 family. Part of the 50S ribosomal subunit.

Functionally, one of two assembly initiator proteins, it binds directly to the 5'-end of the 23S rRNA, where it nucleates assembly of the 50S subunit. Its function is as follows. One of the proteins that surrounds the polypeptide exit tunnel on the outside of the subunit. The sequence is that of Large ribosomal subunit protein uL24 from Agrobacterium fabrum (strain C58 / ATCC 33970) (Agrobacterium tumefaciens (strain C58)).